Reading from the N-terminus, the 1073-residue chain is Transmembrane protein 132E (1073 aa).

The N-terminal stretch at 1–33 is a signal peptide; it reads MGHFVVQGDLPWILCSLRLVIMIIAGKVSPTSS. Over 34 to 899 the chain is Extracellular; it reads DALFSVPVPS…MTDLEIGMYA (866 aa). Asparagine 102 is a glycosylation site (N-linked (GlcNAc...) asparagine). The tract at residues 246–270 is disordered; it reads DPDSNDECGESYPRRGGPSRGESLS. Asparagine 324, asparagine 396, and asparagine 746 each carry an N-linked (GlcNAc...) asparagine glycan. Residues 900 to 920 form a helical membrane-spanning segment; sequence LLGVFCLAILVFLINCIVFVL. Over 921 to 1073 the chain is Cytoplasmic; that stretch reads KYRHKRIPPE…DYMRRIKEIA (153 aa). The span at 952-970 shows a compositional bias: polar residues; sequence TQSDLSPQTVESPSNTLEG. The interval 952–1024 is disordered; it reads TQSDLSPQTV…PTSKRKRVKF (73 aa). Residues 982–994 are compositionally biased toward low complexity; that stretch reads SGSSQTSVQSQVH.

This sequence belongs to the TMEM132 family.

The protein localises to the membrane. Functionally, required for normal inner ear hair cell function and hearing. This chain is Transmembrane protein 132E (tmem132e), found in Danio rerio (Zebrafish).